The chain runs to 309 residues: NADH-cytochrome b5 reductase 1 (309 aa).

A helical transmembrane segment spans residues 29–49 (EFVPYAVALTAVLAGFKLFTG). Residues 60-165 (TEFQEFVLKE…RGPKGAMVYT (106 aa)) enclose the FAD-binding FR-type domain. FAD contacts are provided by residues 145 to 160 (TTLKVGDVMKVRGPKG) and 171 to 208 (HIGMIAGGTGITPMLQVIKAIIRNRPRNGGTDITKVDL).

The protein belongs to the flavoprotein pyridine nucleotide cytochrome reductase family. In terms of assembly, monomer. Component of the 2-(3-amino-3-carboxypropyl)histidine synthase complex composed of dph1, dph2, dph3 and a NADH-dependent reductase, predominantly cbr1. The cofactor is FAD.

The protein resides in the mitochondrion outer membrane. It catalyses the reaction 2 Fe(III)-[cytochrome b5] + NADH = 2 Fe(II)-[cytochrome b5] + NAD(+) + H(+). It carries out the reaction 2 Fe(3+)-[Dph3] + NADH = 2 Fe(2+)-[Dph3] + NAD(+) + H(+). It functions in the pathway protein modification; peptidyl-diphthamide biosynthesis. Its function is as follows. NADH-dependent reductase for dph3 and cytochrome b5. Required for the first step of diphthamide biosynthesis, a post-translational modification of histidine which occurs in elongation factor 2. Dph1 and dph2 transfer a 3-amino-3-carboxypropyl (ACP) group from S-adenosyl-L-methionine (SAM) to a histidine residue, the reaction is assisted by a reduction system comprising dph3 and a NADH-dependent reductase, predominantly cbr1. By reducing dph3, also involved in the formation of the tRNA wobble base modification mcm5s 2U (5-methoxycarbonylmethyl-2-thiouridine), mediated by the elongator complex. The cytochrome b5/NADH cytochrome b5 reductase electron transfer system supports the catalytic activity of several sterol biosynthetic enzymes. The chain is NADH-cytochrome b5 reductase 1 (cbr1) from Aspergillus clavatus (strain ATCC 1007 / CBS 513.65 / DSM 816 / NCTC 3887 / NRRL 1 / QM 1276 / 107).